We begin with the raw amino-acid sequence, 63 residues long: Large ribosomal subunit protein bL28 (63 aa).

It belongs to the bacterial ribosomal protein bL28 family.

In Pelobacter propionicus (strain DSM 2379 / NBRC 103807 / OttBd1), this protein is Large ribosomal subunit protein bL28.